Here is a 501-residue protein sequence, read N- to C-terminus: Aluminum-activated malate transporter 2 (501 aa).

The next 6 membrane-spanning stretches (helical) occupy residues 22–42, 52–72, 78–98, 101–121, 130–150, and 166–186; these read VVHAFKVGLALALVSSFYYYQ, AMWAVMTVVVVFEFSVGATLG, AVATLVAGGLGIGAHHLASLS, TVEPILLAIFVFVLAALSTFV, RYDYGVLIFILTFALISVSGF, and VIMGGVSCVLISIFVCPVWAG. The tract at residues 398–425 is disordered; it reads FKNKKKPSKSNSGSIGQAMPNKSHDDDD.

The protein belongs to the aromatic acid exporter (TC 2.A.85) family.

It is found in the membrane. Functionally, malate transporter. The sequence is that of Aluminum-activated malate transporter 2 (ALMT2) from Arabidopsis thaliana (Mouse-ear cress).